The chain runs to 1240 residues: Structural polyprotein (1240 aa).

Residues 1 to 35 (MFPYPTLNYPPMAPINPMAYRDPNPPRQVAPFRPP) are necessary for nucleocapsid assembly and virus assembly. The interval 1 to 102 (MFPYPTLNYP…RKPKPGKRQR (102 aa)) is disordered. A compositionally biased stretch (pro residues) spans 23 to 34 (PNPPRQVAPFRP). The interval 36 to 69 (LAAQIEDLRRSIANLTLKQRAPNPPAGPPAKRKK) is host transcription inhibition. Residues 43–50 (LRRSIANL) carry the Supraphysiological nuclear export signal motif. N-linked (GlcNAc...) asparagine; by host glycosylation occurs at Asn49. Residues 65 to 102 (AKRKKPAPKPKPAQAKKKRPPPPAKKQKRKPKPGKRQR) are compositionally biased toward basic residues. Residues 66–70 (KRKKP) carry the Nuclear localization signal motif. Residues 82 to 112 (KRPPPPAKKQKRKPKPGKRQRMCMKLESDKT) form a binding to the viral RNA region. The segment at 97 to 111 (PGKRQRMCMKLESDK) is ribosome-binding. Ser109 bears the Phosphoserine mark. Residues 111 to 260 (KTFPIMLNGQ…KDTPEGSEPW (150 aa)) form the Peptidase S3 domain. Thr112 is modified (phosphothreonine). Catalysis depends on charge relay system residues His137, Asp159, and Ser211. The interval 261–272 (SLATVMCVLANI) is functions as an uncleaved signal peptide for the precursor of protein E3/E2. Residues 261-682 (SLATVMCVLA…HEVVVYYYNR (422 aa)) are Extracellular-facing. 2 N-linked (GlcNAc...) asparagine; by host glycosylation sites follow: Asn271 and Asn638. Residues 683-703 (YPLTTIIGLCTCVAIIMVSCV) traverse the membrane as a helical segment. Residues 704-743 (HPCGSFAGLRNLCITPYKLAPNAQVPILLALLCCIKPTRA) lie on the Cytoplasmic side of the membrane. 4 S-palmitoyl cysteine; by host lipidation sites follow: Cys706, Cys716, Cys736, and Cys737. A transient transmembrane before p62-6K protein processing region spans residues 715–735 (LCITPYKLAPNAQVPILLALL). Residues 744–758 (DDTLQVLNYLWNNNQ) are Extracellular-facing. A helical membrane pass occupies residues 759–779 (NFFWMQTLIPLAALIVCMRIV). Arg780 is a topological domain (cytoplasmic). Residues 781–801 (CLFCCGPAFLLVCGAWAAAYE) form a helical membrane-spanning segment. Topologically, residues 802–1216 (HTAVMPNKVG…WSWLKVLVGG (415 aa)) are extracellular. Asn834 carries N-linked (GlcNAc...) asparagine; by host glycosylation. 4 disulfides stabilise this stretch: Cys848-Cys913, Cys861-Cys893, Cys862-Cys895, and Cys867-Cys877. The E1 fusion peptide loop stretch occupies residues 883 to 900 (VYPFMWGGAYCFCDTENT). N-linked (GlcNAc...) asparagine; by host glycosylation is present at Asn933. 3 disulfide bridges follow: Cys1059/Cys1071, Cys1101/Cys1176, and Cys1106/Cys1180. The chain crosses the membrane as a helical span at residues 1217 to 1237 (TSAFIVLGLIATAVVALVLFF). Residues 1238-1240 (HRH) lie on the Cytoplasmic side of the membrane.

As to quaternary structure, part of a tetrameric complex composed of host CRM1, host importin alpha/beta dimer and the viral capsid; this complex blocks the receptor-mediated transport through the nuclear pore. Interacts with host phosphatase PPP1CA; this interaction dephosphorylates the capsid protein, which increases its ability to bind to the viral genome. Interacts with host karyopherin KPNA4; this interaction allows the nuclear import of the viral capsid protein. Interacts with spike glycoprotein E2. Interacts with host IRAK1; the interaction leads to inhibition of IRAK1-dependent signaling. The precursor of protein E3/E2 and E1 form a heterodimer shortly after synthesis. In terms of assembly, the precursor of protein E3/E2 and E1 form a heterodimer shortly after synthesis. Processing of the precursor of protein E3/E2 into E2 and E3 results in a heterodimer of the spike glycoproteins E2 and E1. Spike at virion surface are constituted of three E2-E1 heterodimers. After target cell attachment and endocytosis, E1 change conformation to form homotrimers. Interacts with 6K protein. As to quaternary structure, processing of the precursor of protein E3/E2 into E2 and E3 results in a heterodimer of the spike glycoproteins E2 and E1. Spike at virion surface are constituted of three E2-E1 heterodimers. Interacts with 6K protein. Interacts with spike glycoprotein E1. Interacts with spike glycoprotein E2. Post-translationally, structural polyprotein: Specific enzymatic cleavages in vivo yield mature proteins. Capsid protein is auto-cleaved during polyprotein translation, unmasking a signal peptide at the N-terminus of the precursor of E3/E2. The remaining polyprotein is then targeted to the host endoplasmic reticulum, where host signal peptidase cleaves it into pE2, 6K and E1 proteins. pE2 is further processed to mature E3 and E2 by host furin in trans-Golgi vesicle. Phosphorylated on serine and threonine residues. In terms of processing, palmitoylated via thioester bonds. These palmitoylations may induce disruption of the C-terminus transmembrane. This would result in the reorientation of E2 C-terminus from lumenal to cytoplasmic side. Post-translationally, N-glycosylated. Palmitoylated via thioester bonds.

The protein localises to the virion. It localises to the host cytoplasm. Its subcellular location is the host cell membrane. The protein resides in the host nucleus. It is found in the virion membrane. It carries out the reaction Autocatalytic release of the core protein from the N-terminus of the togavirus structural polyprotein by hydrolysis of a -Trp-|-Ser- bond.. In terms of biological role, forms an icosahedral capsid with a T=4 symmetry composed of 240 copies of the capsid protein surrounded by a lipid membrane through which penetrate 80 spikes composed of trimers of E1-E2 heterodimers. The capsid protein binds to the viral RNA genome at a site adjacent to a ribosome binding site for viral genome translation following genome release. Possesses a protease activity that results in its autocatalytic cleavage from the nascent structural protein. Following its self-cleavage, the capsid protein transiently associates with ribosomes, and within several minutes the protein binds to viral RNA and rapidly assembles into icosahedric core particles. The resulting nucleocapsid eventually associates with the cytoplasmic domain of the spike glycoprotein E2 at the cell membrane, leading to budding and formation of mature virions. In case of infection, new virions attach to target cells and after clathrin-mediated endocytosis their membrane fuses with the host endosomal membrane. This leads to the release of the nucleocapsid into the cytoplasm, followed by an uncoating event necessary for the genomic RNA to become accessible. The uncoating might be triggered by the interaction of capsid proteins with ribosomes. Binding of ribosomes would release the genomic RNA since the same region is genomic RNA-binding and ribosome-binding. Specifically inhibits interleukin-1 receptor-associated kinase 1/IRAK1-dependent signaling during viral entry, representing a means by which the alphaviruses may evade innate immune detection and activation prior to viral gene expression. Inhibits host transcription. Forms a tetrameric complex with XPO1/CRM1 and the nuclear import receptor importin. This complex blocks the central channel of host nuclear pores thereby inhibiting the receptor-mediated nuclear transport and thus the host mRNA and rRNA transcription. The inhibition of transcription is linked to a cytopathic effect on the host cell. Its function is as follows. Provides the signal sequence for the translocation of the precursor of protein E3/E2 to the host endoplasmic reticulum. Furin-cleaved E3 remains associated with spike glycoprotein E1 and mediates pH protection of the latter during the transport via the secretory pathway. After virion release from the host cell, the assembly protein E3 is gradually released in the extracellular space. Functionally, plays a role in viral attachment to target host cell, by binding to the cell receptor. Synthesized as a p62 precursor which is processed by furin at the cell membrane just before virion budding, giving rise to E2-E1 heterodimer. The p62-E1 heterodimer is stable, whereas E2-E1 is unstable and dissociate at low pH. p62 is processed at the last step, presumably to avoid E1 fusion activation before its final export to cell surface. E2 C-terminus contains a transitory transmembrane that would be disrupted by palmitoylation, resulting in reorientation of the C-terminal tail from lumenal to cytoplasmic side. This step is critical since E2 C-terminus is involved in budding by interacting with capsid proteins. This release of E2 C-terminus in cytoplasm occurs lately in protein export, and precludes premature assembly of particles at the endoplasmic reticulum membrane. Constitutive membrane protein involved in virus glycoprotein processing, cell permeabilization, and the budding of viral particles. Disrupts the calcium homeostasis of the cell, probably at the endoplasmic reticulum level. This leads to cytoplasmic calcium elevation. Because of its lipophilic properties, the 6K protein is postulated to influence the selection of lipids that interact with the transmembrane domains of the glycoproteins, which, in turn, affects the deformability of the bilayer required for the extreme curvature that occurs as budding proceeds. Present in low amount in virions, about 3% compared to viral glycoproteins. In terms of biological role, class II viral fusion protein. Fusion activity is inactive as long as E1 is bound to E2 in mature virion. After virus attachment to target cell and endocytosis, acidification of the endosome would induce dissociation of E1/E2 heterodimer and concomitant trimerization of the E1 subunits. This E1 trimer is fusion active, and promotes release of viral nucleocapsid in cytoplasm after endosome and viral membrane fusion. Efficient fusion requires the presence of cholesterol and sphingolipid in the target membrane. Fusion is optimal at levels of about 1 molecule of cholesterol per 2 molecules of phospholipids, and is specific for sterols containing a 3-beta-hydroxyl group. The protein is Structural polyprotein of Eastern equine encephalitis virus (strain va33[ten broeck]) (EEEV).